A 202-amino-acid chain; its full sequence is Imidazoleglycerol-phosphate dehydratase (202 aa).

The protein belongs to the imidazoleglycerol-phosphate dehydratase family.

The protein localises to the cytoplasm. The enzyme catalyses D-erythro-1-(imidazol-4-yl)glycerol 3-phosphate = 3-(imidazol-4-yl)-2-oxopropyl phosphate + H2O. The protein operates within amino-acid biosynthesis; L-histidine biosynthesis; L-histidine from 5-phospho-alpha-D-ribose 1-diphosphate: step 6/9. The protein is Imidazoleglycerol-phosphate dehydratase of Corynebacterium diphtheriae (strain ATCC 700971 / NCTC 13129 / Biotype gravis).